The following is a 447-amino-acid chain: Tubulin beta-1 chain (447 aa).

Q11 contacts GTP. At S40 the chain carries Phosphoserine. Positions 69, 138, 142, 143, 144, 204, and 226 each coordinate GTP. E69 lines the Mg(2+) pocket. Position 339 is a phosphoserine (S339). A disordered region spans residues 427–447; it reads EATADEDAEFEEEQEAEVDEN. Residues 429–447 show a composition bias toward acidic residues; sequence TADEDAEFEEEQEAEVDEN.

The protein belongs to the tubulin family. Dimer of alpha and beta chains. A typical microtubule is a hollow water-filled tube with an outer diameter of 25 nm and an inner diameter of 15 nM. Alpha-beta heterodimers associate head-to-tail to form protofilaments running lengthwise along the microtubule wall with the beta-tubulin subunit facing the microtubule plus end conferring a structural polarity. Microtubules usually have 13 protofilaments but different protofilament numbers can be found in some organisms and specialized cells. Interacts with mgr and Vhl. Mg(2+) serves as cofactor.

It is found in the cytoplasm. The protein resides in the cytoskeleton. Its function is as follows. Tubulin is the major constituent of microtubules, a cylinder consisting of laterally associated linear protofilaments composed of alpha- and beta-tubulin heterodimers. Microtubules grow by the addition of GTP-tubulin dimers to the microtubule end, where a stabilizing cap forms. Below the cap, tubulin dimers are in GDP-bound state, owing to GTPase activity of alpha-tubulin. In Drosophila melanogaster (Fruit fly), this protein is Tubulin beta-1 chain (betaTub56D).